Here is a 294-residue protein sequence, read N- to C-terminus: Deubiquitinase OTUD6B (294 aa).

Met1 carries the post-translational modification N-acetylmethionine. The OTU domain occupies 148-285; that stretch reads LEIKQIPSDG…GEHYNSVTRL (138 aa). A cys-loop region spans residues 153 to 159; the sequence is IPSDGHC. The active site involves Asp156. Residue Cys159 is the Nucleophile of the active site. The interval 220–230 is variable-loop; that stretch reads IVNTAAWGGQL. The interval 268-278 is his-loop; it reads YMRHAYGLGEH. Residue His278 is part of the active site.

In terms of assembly, interacts with the eukaryotic translation initiation factor 4F complex. Ubiquitously expressed. Expression is observed in several organ systems including the cardiovascular, digestive, central and peripheral nervous and musculoskeletal systems.

The enzyme catalyses Thiol-dependent hydrolysis of ester, thioester, amide, peptide and isopeptide bonds formed by the C-terminal Gly of ubiquitin (a 76-residue protein attached to proteins as an intracellular targeting signal).. Functionally, deubiquitinating enzyme that may play a role in the ubiquitin-dependent regulation of protein synthesis, downstream of mTORC1. May associate with the protein synthesis initiation complex and modify its ubiquitination to repress translation. May also repress DNA synthesis and modify different cellular targets thereby regulating cell growth and proliferation. May also play a role in proteasome assembly and function. The sequence is that of Deubiquitinase OTUD6B from Mus musculus (Mouse).